The chain runs to 360 residues: MKALILVGGYGTRLRPLTLSIPKPLVDFCNKPILLHQVEALASAGVDHVILAVSYMSQMLEKEMKAQEQRLGIRISMSHEEEPLGTAGPLALARDLLSETAEPFFVLNSDVICDFPFQAMVQFHRHHGQEGSILVTKVEEPSKYGVVVCEADTGRIHRFVEKPQVFVSNKINAGMYILSPAVLQRIQLQPTSIEKEIFPVMAKEGQLYAMELQGFWMDIGQPKDFLTGMCLFLQSLRQKQPEQLCSGPGIVGNVLVDPSARIGKNCSIGPNVSLGPGVVVEDGVCIRRCTVLRDARIRSHSWLESCIVCWRCRVGQWVRMENVTVLGEDVIVNDELYLNGASVLPHKSIGESVPEPGIIM.

A substrate-binding domain region spans residues 2–222 (KALILVGGYG…QGFWMDIGQP (221 aa)). A GDP-alpha-D-mannose-binding site is contributed by Asp110. Residue Asp110 participates in Mg(2+) binding. Residue Lys162 is part of the active site. Position 218 (Asp218) interacts with GDP-alpha-D-mannose. Residue Asp218 participates in Mg(2+) binding. Positions 245-360 (CSGPGIVGNV…ESVPEPGIIM (116 aa)) are hexapeptide repeat domain.

It belongs to the transferase hexapeptide repeat family. As to quaternary structure, component of the GMPPA-GMPPB mannose-1-phosphate guanylyltransferase complex composed of 4 GMPPA subunits and 8 GMPPB subunits; the complex is organized into three layers, a central layer made up of 2 GMPPA dimers sandwiched between two layers each made up of 2 GMPPB dimers. GMPPB catalytic activity is reduced when part of the complex and binding of GDP-alpha-D-Mannose by GMPPA induces allosteric feedback inhibition of GMPPB. Requires Mg(2+) as cofactor. In terms of tissue distribution, expressed in the liver (at protein level).

It is found in the cytoplasm. The catalysed reaction is alpha-D-mannose 1-phosphate + GTP + H(+) = GDP-alpha-D-mannose + diphosphate. It functions in the pathway nucleotide-sugar biosynthesis; GDP-alpha-D-mannose biosynthesis; GDP-alpha-D-mannose from alpha-D-mannose 1-phosphate (GTP route): step 1/1. Its activity is regulated as follows. Enzyme activity is reduced by incorporation into the GMPPA-GMPPB mannose-1-phosphate guanylyltransferase complex. Allosterically inhibited, when part of the GMPPA-GMPPB complex, by GDP-alpha-D-mannose binding to GMPPA. Its function is as follows. Catalytic subunit of the GMPPA-GMPPB mannose-1-phosphate guanylyltransferase complex. Catalyzes the formation of GDP-mannose, an essential precursor of glycan moieties of glycoproteins and glycolipids. Can catalyze the reverse reaction in vitro. Together with GMPPA regulates GDP-alpha-D-mannose levels. This chain is Mannose-1-phosphate guanylyltransferase catalytic subunit beta, found in Sus scrofa (Pig).